A 232-amino-acid polypeptide reads, in one-letter code: Ribonuclease 3 (232 aa).

One can recognise an RNase III domain in the interval 6 to 137 (QEMLKRDFNI…FIGALYLDQG (132 aa)). Residue E50 participates in Mg(2+) binding. Residue D54 is part of the active site. Positions 123 and 126 each coordinate Mg(2+). Residue E126 is part of the active site. The region spanning 163–232 (DNKTELQEVL…AYQALKKLRK (70 aa)) is the DRBM domain.

Belongs to the ribonuclease III family. As to quaternary structure, homodimer. It depends on Mg(2+) as a cofactor.

Its subcellular location is the cytoplasm. It catalyses the reaction Endonucleolytic cleavage to 5'-phosphomonoester.. Digests double-stranded RNA. Involved in the processing of primary rRNA transcript to yield the immediate precursors to the large and small rRNAs (23S and 16S). Processes some mRNAs, and tRNAs when they are encoded in the rRNA operon. Processes pre-crRNA and tracrRNA of type II CRISPR loci if present in the organism. This is Ribonuclease 3 from Ligilactobacillus salivarius (strain UCC118) (Lactobacillus salivarius).